Here is a 304-residue protein sequence, read N- to C-terminus: N-acetyl-D-glucosamine kinase (304 aa).

ATP contacts are provided by residues 4-11 (GFDMGGTK) and 133-140 (GLGGGLVI). The Zn(2+) site is built by H157, C177, C179, and C184.

It belongs to the ROK (NagC/XylR) family. NagK subfamily.

The catalysed reaction is N-acetyl-D-glucosamine + ATP = N-acetyl-D-glucosamine 6-phosphate + ADP + H(+). The protein operates within cell wall biogenesis; peptidoglycan recycling. Its function is as follows. Catalyzes the phosphorylation of N-acetyl-D-glucosamine (GlcNAc) derived from cell-wall degradation, yielding GlcNAc-6-P. This is N-acetyl-D-glucosamine kinase from Pectobacterium atrosepticum (strain SCRI 1043 / ATCC BAA-672) (Erwinia carotovora subsp. atroseptica).